Here is a 258-residue protein sequence, read N- to C-terminus: tRNA pseudouridine synthase A (258 aa).

Aspartate 52 (nucleophile) is an active-site residue. Tyrosine 110 provides a ligand contact to substrate.

The protein belongs to the tRNA pseudouridine synthase TruA family. As to quaternary structure, homodimer.

It catalyses the reaction uridine(38/39/40) in tRNA = pseudouridine(38/39/40) in tRNA. Its function is as follows. Formation of pseudouridine at positions 38, 39 and 40 in the anticodon stem and loop of transfer RNAs. This Francisella tularensis subsp. novicida (strain U112) protein is tRNA pseudouridine synthase A.